Consider the following 128-residue polypeptide: Small ribosomal subunit protein uS8 (128 aa).

This sequence belongs to the universal ribosomal protein uS8 family. As to quaternary structure, part of the 30S ribosomal subunit. Contacts proteins S5 and S12.

In terms of biological role, one of the primary rRNA binding proteins, it binds directly to 16S rRNA central domain where it helps coordinate assembly of the platform of the 30S subunit. The protein is Small ribosomal subunit protein uS8 of Methylacidiphilum infernorum (isolate V4) (Methylokorus infernorum (strain V4)).